The sequence spans 348 residues: Galactose-1-phosphate uridylyltransferase (348 aa).

28–31 (RAKR) is a binding site for UDP-alpha-D-glucose. Zn(2+)-binding residues include cysteine 52 and cysteine 55. Residues valine 61 and 77–78 (ND) each bind UDP-alpha-D-glucose. Histidine 115 serves as a coordination point for Zn(2+). Residues asparagine 153 and 159-161 (GCS) each bind UDP-alpha-D-glucose. Histidine 164 contacts Zn(2+). The active-site Tele-UMP-histidine intermediate is histidine 166. Glutamine 168 provides a ligand contact to UDP-alpha-D-glucose. The Fe cation site is built by glutamate 182, histidine 281, histidine 296, and histidine 298. Residues 311–312 (KF), 316–317 (YE), and glutamine 323 each bind UDP-alpha-D-glucose.

This sequence belongs to the galactose-1-phosphate uridylyltransferase type 1 family. The cofactor is Zn(2+).

The catalysed reaction is alpha-D-galactose 1-phosphate + UDP-alpha-D-glucose = alpha-D-glucose 1-phosphate + UDP-alpha-D-galactose. Its pathway is carbohydrate metabolism; galactose metabolism. This is Galactose-1-phosphate uridylyltransferase (galT) from Salmonella typhimurium (strain LT2 / SGSC1412 / ATCC 700720).